We begin with the raw amino-acid sequence, 404 residues long: Hemocyanin, beta-C chain unit G (404 aa).

Asparagine 38 carries an N-linked (GlcNAc...) asparagine glycan. Histidine 50 contributes to the Cu cation binding site. A disulfide bond links cysteine 56 and cysteine 65. An N-linked (GlcNAc...) asparagine glycan is attached at asparagine 60. Histidine 61 contributes to the Cu cation binding site. Residues 66–68 constitute a cross-link (2'-(S-cysteinyl)-histidine (Cys-His)); sequence CIH. Positions 77, 176, 180, and 207 each coordinate Cu cation. 2 disulfide bridges follow: cysteine 166–cysteine 233 and cysteine 320–cysteine 326. Residue asparagine 378 is glycosylated (N-linked (GlcNAc...) asparagine).

This sequence belongs to the tyrosinase family. Hemocyanin subfamily. Decamers of large identical subunits (450 kDa), each containing 8 globular oxygen-binding functional units. Cu(2+) serves as cofactor.

Hemocyanins are copper-containing oxygen carriers occurring freely dissolved in the hemolymph of many mollusks and arthropods. In Helix pomatia (Roman snail), this protein is Hemocyanin, beta-C chain unit G.